The chain runs to 123 residues: Mitochondrial zinc maintenance protein 1, mitochondrial (123 aa).

Residues 1–24 (MSTRTKALNAYRHGLRATRIAFRN) constitute a mitochondrion transit peptide.

It belongs to the complex I LYR family. MZM1 subfamily. In terms of assembly, interacts with RIP1.

The protein resides in the mitochondrion matrix. Functionally, assembly factor required for Rieske Fe-S protein RIP1 incorporation into the cytochrome b-c1 (CIII) complex. Functions as a chaperone, binding to this subunit within the mitochondrial matrix and stabilizing it prior to its translocation and insertion into the late CIII dimeric intermediate within the mitochondrial inner membrane. Modulates the mitochondrial matrix zinc pool. The chain is Mitochondrial zinc maintenance protein 1, mitochondrial (MZM1) from Saccharomyces cerevisiae (strain RM11-1a) (Baker's yeast).